Reading from the N-terminus, the 138-residue chain is Basic phospholipase A2 homolog acutohaemolysin (138 aa).

Residues 1–16 (MRALWIVAVLLVGVEG) form the signal peptide. Cystine bridges form between cysteine 42–cysteine 131, cysteine 44–cysteine 60, cysteine 59–cysteine 111, cysteine 65–cysteine 138, cysteine 66–cysteine 104, cysteine 73–cysteine 97, and cysteine 91–cysteine 102. Residues 121 to 133 (KSFRYHLKPSCKK) form an important for membrane-damaging activities in eukaryotes and bacteria; heparin-binding region.

Monomer. In terms of tissue distribution, expressed by the venom gland.

Its subcellular location is the secreted. In terms of biological role, snake venom phospholipase A2 homolog that lacks enzymatic activity. Is myotoxic. Has a strong indirect hemolytic activity and anticoagulant activity. A model of myotoxic mechanism has been proposed: an apo Lys49-PLA2 is activated by the entrance of a hydrophobic molecule (e.g. fatty acid) at the hydrophobic channel of the protein leading to a reorientation of a monomer. This reorientation causes a transition between 'inactive' to 'active' states, causing alignment of C-terminal and membrane-docking sites (MDoS) side-by-side and putting the membrane-disruption sites (MDiS) in the same plane, exposed to solvent and in a symmetric position for both monomers. The MDoS region stabilizes the toxin on membrane by the interaction of charged residues with phospholipid head groups. Subsequently, the MDiS region destabilizes the membrane with penetration of hydrophobic residues. This insertion causes a disorganization of the membrane, allowing an uncontrolled influx of ions (i.e. calcium and sodium), and eventually triggering irreversible intracellular alterations and cell death. This is Basic phospholipase A2 homolog acutohaemolysin from Deinagkistrodon acutus (Hundred-pace snake).